The primary structure comprises 342 residues: Inositol-tetrakisphosphate 1-kinase 1 (342 aa).

Positions 28 and 70 each coordinate 1D-myo-inositol 6-phosphate. Positions 105 and 155 each coordinate ATP. One can recognise an ATP-grasp domain in the interval 116 to 332 (DHAADQDSTF…HKDGVGNQQE (217 aa)). The 1D-myo-inositol 6-phosphate site is built by Gly161 and His166. Residues His166, Gln187, and Val190 each contribute to the ATP site. 2 residues coordinate 1D-myo-inositol 6-phosphate: Lys198 and Tyr200. ATP is bound at residue Ser213. Residues 219–247 (PEDDASAQGSVSFSQVSNLPTERTAEEYY) form a catalytic specificity elements (CSE) region. Asn280 is a binding site for 1D-myo-inositol 6-phosphate. Asp282 contacts Mg(2+). Positions 296, 297, and 299 each coordinate ATP. Mg(2+)-binding residues include Asp297 and Asn299. 1D-myo-inositol 6-phosphate contacts are provided by Asn299, Gly303, and Lys306.

It belongs to the ITPK1 family. As to quaternary structure, monomer. Mg(2+) serves as cofactor. As to expression, expressed in the embryo of 15 day after pollination. Expressed in kernels at earlier stages but at very low levels. Expression in the embryo peaks at 15 days after pollination and then declines. No expression is detected from endosperm and vegetative tissues.

The enzyme catalyses 1D-myo-inositol 3,4,5,6-tetrakisphosphate + ATP = 1D-myo-inositol 1,3,4,5,6-pentakisphosphate + ADP + H(+). The catalysed reaction is 1D-myo-inositol 1,3,4-trisphosphate + ATP = 1D-myo-inositol 1,3,4,5-tetrakisphosphate + ADP + H(+). It carries out the reaction 1D-myo-inositol 1,3,4-trisphosphate + ATP = 1D-myo-inositol 1,3,4,6-tetrakisphosphate + ADP + H(+). It catalyses the reaction 1D-myo-inositol 1,2,3,4,5-pentakisphosphate + ATP = 3-diphospho-1D-myo-inositol 1,2,4,5-tetrakisphosphate + ADP. The enzyme catalyses 1D-myo-inositol hexakisphosphate + ATP = 5-diphospho-1D-myo-inositol 1,2,3,4,6-pentakisphosphate + ADP. Functionally, kinase that can phosphorylate various inositol polyphosphate such as Ins(3,4,5,6)P4 or Ins(1,3,4)P3 and participates in phytic acid biosynthesis in developing seeds. Phosphorylates Ins(3,4,5,6)P4 at position 1 to form Ins(1,3,4,5,6)P5. This reaction is thought to have regulatory importance, since Ins(3,4,5,6)P4 is an inhibitor of plasma membrane Ca(2+)-activated Cl(-) channels, while Ins(1,3,4,5,6)P5 is not. Also phosphorylates Ins(1,3,4)P3 on O-5 and O-6 to form Ins(1,3,4,6)P4, an essential molecule in the hexakisphosphate (InsP6) pathway. Also able to phosphorylate Ins(3,5,6)P3 but not Ins(1,4,5)P3, Ins(2,4,5)P3, Ins(1,3,4,6)P4 nor Ins(1,3,5,6)P4. Has higher specific activity on Ins(3,4,5,6)P4 than Ins(1,3,4)P3 and Ins(3,5,6)P3. Can also could use Ins(1,2,5,6)P4 as a substrate. Able to add a beta-phosphate to the 3 positions of Ins(1,2,3,4,5)P5 and to add beta-phosphate to InsP6 to yield 5-InsP7, thus exhibiting InsP6 kinase activity. Also has Ins(1,3,4,5,6)P5 phosphatase activity. The sequence is that of Inositol-tetrakisphosphate 1-kinase 1 from Zea mays (Maize).